A 561-amino-acid polypeptide reads, in one-letter code: Type II methyltransferase M.BstVI (561 aa).

Belongs to the N(4)/N(6)-methyltransferase family.

It catalyses the reaction a 2'-deoxyadenosine in DNA + S-adenosyl-L-methionine = an N(6)-methyl-2'-deoxyadenosine in DNA + S-adenosyl-L-homocysteine + H(+). Functionally, a gamma subtype methylase, recognizes the double-stranded sequence 5'-CTCGAG-3', methylates A-5 on both strands, and protects the DNA from cleavage by the BstVI endonuclease. The polypeptide is Type II methyltransferase M.BstVI (Geobacillus stearothermophilus (Bacillus stearothermophilus)).